Reading from the N-terminus, the 198-residue chain is Ribosome maturation factor RimP (198 aa).

The protein belongs to the RimP family.

The protein resides in the cytoplasm. Required for maturation of 30S ribosomal subunits. This is Ribosome maturation factor RimP from Rhizobium rhizogenes (strain K84 / ATCC BAA-868) (Agrobacterium radiobacter).